Consider the following 620-residue polypeptide: Glutathione-regulated potassium-efflux system protein KefC (620 aa).

The next 12 membrane-spanning stretches (helical) occupy residues 4-24 (HTLIQALIYLGSAALIVPIAV), 26-46 (LGLGSVLGYLIAGCIIGPWGL), 54-74 (SILHFAEIGVVLMLFIIGLEL), 90-110 (GALQMVICGGLLGLFCMLLGL), 114-134 (VAELIGMTLALSSTAIAMQAM), 149-169 (FAVLLFQDIAAIPLVAMIPLL), 178-198 (MGAFALSALKVAGALVLVVLL), 218-238 (VFSAVALFLVFGFGLLLEEVG), 270-290 (GLLLGLFFIGVGMSIDFGTLL), 294-314 (LRIVILLLGFLIIKIAMLWLI), 327-347 (WFAVLLGQGSEFAFVVFGTAQ), and 359-379 (SLTLAVALSMAATPILLVILN). The RCK N-terminal domain occupies 399–518 (QPRVIIAGFG…AGVEKPERET (120 aa)). The interval 597 to 620 (GWQGTEEGKHTGNMADEPETKPSS) is disordered.

The protein belongs to the monovalent cation:proton antiporter 2 (CPA2) transporter (TC 2.A.37) family. KefC subfamily. Homodimer. Interacts with the regulatory subunit KefF.

The protein resides in the cell inner membrane. Its function is as follows. Pore-forming subunit of a potassium efflux system that confers protection against electrophiles. Catalyzes K(+)/H(+) antiport. This is Glutathione-regulated potassium-efflux system protein KefC from Shigella sonnei (strain Ss046).